Reading from the N-terminus, the 388-residue chain is MSAATTADIDHYRTVLAGAFDDQVLEWTREAEARQRFPRELIEHLGARGVFSEKWCGGMLPDVGKLVELARALGRLSSAGIGVGVSLHDSAIAVLRRFGKSDYLRDICERAIAGQAVLCIGASEESGGSDLQIVRTEMSSRDGGFDIRGVKKFVSLSPIADHIMVVARSIDHDSASKHGNVALIAVPTSQASVQRPYAKVGAGPLDTAAVHIDTWVPADALVARAGTGLAAISWGLAHERMSIAGQIAASCQRAIGITLARMMTRRQFGRTLFEHQALRLRMADLQARVDLLQHGLNGIAAQGRLDLRAAAGVKVTAARLGEEVMSECMHIFGGAGYLVEETPLGRWWRDMKLARVGGGTDEVLWELVAAGMAADHGGYRSVVGASSA.

This sequence belongs to the acyl-CoA dehydrogenase family. The cofactor is FAD.

It participates in siderophore biosynthesis; mycobactin biosynthesis. Functionally, catalyzes the dehydrogenation at the alpha-beta position of ACP-bound acyl chains. This results in the introduction of a double bond in the lipidic chain, which is further transferred to the epsilon-amino group of lysine residue in the mycobactin core by MbtK. This Mycolicibacterium paratuberculosis (strain ATCC BAA-968 / K-10) (Mycobacterium paratuberculosis) protein is Acyl-[acyl-carrier-protein] dehydrogenase MbtN (mbtN).